Consider the following 354-residue polypeptide: 3-dehydroquinate synthase (354 aa).

NAD(+) is bound by residues D39, Y45, 68–71, 100–104, 124–125, K136, K145, and 163–166; these read EKTK, GATGD, TT, and FLKT. Zn(2+) contacts are provided by E178, H242, and H256.

It belongs to the sugar phosphate cyclases superfamily. Dehydroquinate synthase family. NAD(+) is required as a cofactor. Co(2+) serves as cofactor. It depends on Zn(2+) as a cofactor.

The protein localises to the cytoplasm. It catalyses the reaction 7-phospho-2-dehydro-3-deoxy-D-arabino-heptonate = 3-dehydroquinate + phosphate. The protein operates within metabolic intermediate biosynthesis; chorismate biosynthesis; chorismate from D-erythrose 4-phosphate and phosphoenolpyruvate: step 2/7. Its function is as follows. Catalyzes the conversion of 3-deoxy-D-arabino-heptulosonate 7-phosphate (DAHP) to dehydroquinate (DHQ). In Staphylococcus aureus (strain MRSA252), this protein is 3-dehydroquinate synthase.